The chain runs to 270 residues: Myelin protein zero-like protein 1 (270 aa).

The first 35 residues, 1-35 (MAEAVGAVALIAAPARRRWLWSVLAAMLGLLTARI), serve as a signal peptide directing secretion. Residues 36 to 151 (SALEVHTPKE…DIVVRPGHIR (116 aa)) form the Ig-like V-type domain. At 36–162 (SALEVHTPKE…HVVEIDNLLV (127 aa)) the chain is on the extracellular side. 2 N-linked (GlcNAc...) asparagine glycosylation sites follow: N50 and N130. C58 and C135 are disulfide-bonded. The chain crosses the membrane as a helical span at residues 163 to 183 (FLVWVVVGTVTAVVLGLTLLI). Residues 184–270 (SLVLVVLYRR…SVVYADIRKD (87 aa)) are Cytoplasmic-facing. Residues 201 to 257 (TGCSTSERLSPVKQAPRKCPSDTEGLVKSPPSAGSHQGPVIYAQLDHSGGHHSGKIN) form a disordered region. 4 positions are modified to phosphoserine: S204, S206, S210, and S221. The ITIM motif 1 signature appears at 240-245 (VIYAQL). The residue at position 242 (Y242) is a Phosphotyrosine. Residue S261 is modified to Phosphoserine. The ITIM motif 2 motif lies at 262 to 267 (VVYADI). At Y264 the chain carries Phosphotyrosine.

The protein belongs to the myelin P0 protein family. Interacts with phosphorylated PTPN11/SHP-2. Phosphorylated on tyrosine residues upon stimulation with pervanadate and concanavalin-A (ConA). Phosphorylation at Tyr-242 and Tyr-264 is required for interaction with PTPN11/SHP-2. Dephosphorylated by PTPN11/SHP-2 (in vitro).

It localises to the membrane. In terms of biological role, cell surface receptor, which is involved in signal transduction processes. Recruits PTPN11/SHP-2 to the cell membrane and is a putative substrate of PTPN11/SHP-2. Is a major receptor for concanavalin-A (ConA) and is involved in cellular signaling induced by ConA, which probably includes Src family tyrosine-protein kinases. Isoform 2 seems to have a dominant negative role; it blocks tyrosine phosphorylation of MPZL1 induced by ConA. Isoform 1, but not isoform 2, may be involved in regulation of integrin-mediated cell motility. In Mus musculus (Mouse), this protein is Myelin protein zero-like protein 1 (Mpzl1).